A 473-amino-acid chain; its full sequence is Photosystem II CP43 reaction center protein (473 aa).

Positions 1-14 (MKTLYSLRRFYHVE) are excised as a propeptide. N-acetylthreonine is present on Thr15. Position 15 is a phosphothreonine (Thr15). 5 helical membrane passes run 69–93 (LFEV…PHLA), 134–155 (LLGP…KDRN), 178–200 (KALY…RKIT), 255–275 (KPFA…LSYS), and 291–312 (WFNN…ASQA). Glu367 is a binding site for [CaMn4O5] cluster. Residues 447-471 (RARAAAAGFEKGIDRDFEPVLSMTP) traverse the membrane as a helical segment.

The protein belongs to the PsbB/PsbC family. PsbC subfamily. As to quaternary structure, PSII is composed of 1 copy each of membrane proteins PsbA, PsbB, PsbC, PsbD, PsbE, PsbF, PsbH, PsbI, PsbJ, PsbK, PsbL, PsbM, PsbT, PsbX, PsbY, PsbZ, Psb30/Ycf12, at least 3 peripheral proteins of the oxygen-evolving complex and a large number of cofactors. It forms dimeric complexes. Binds multiple chlorophylls and provides some of the ligands for the Ca-4Mn-5O cluster of the oxygen-evolving complex. It may also provide a ligand for a Cl- that is required for oxygen evolution. PSII binds additional chlorophylls, carotenoids and specific lipids. is required as a cofactor.

It localises to the plastid. It is found in the chloroplast thylakoid membrane. One of the components of the core complex of photosystem II (PSII). It binds chlorophyll and helps catalyze the primary light-induced photochemical processes of PSII. PSII is a light-driven water:plastoquinone oxidoreductase, using light energy to abstract electrons from H(2)O, generating O(2) and a proton gradient subsequently used for ATP formation. The sequence is that of Photosystem II CP43 reaction center protein from Manihot esculenta (Cassava).